Here is a 213-residue protein sequence, read N- to C-terminus: ATP-dependent dethiobiotin synthetase BioD (213 aa).

Position 12–17 (12–17 (EVGKTY)) interacts with ATP. Threonine 16 serves as a coordination point for Mg(2+). Lysine 37 is a catalytic residue. ATP contacts are provided by residues aspartate 46, 107-110 (EGVG), and 167-168 (NN). Mg(2+) contacts are provided by aspartate 46 and glutamate 107.

This sequence belongs to the dethiobiotin synthetase family. Homodimer. Mg(2+) is required as a cofactor.

The protein localises to the cytoplasm. The catalysed reaction is (7R,8S)-7,8-diammoniononanoate + CO2 + ATP = (4R,5S)-dethiobiotin + ADP + phosphate + 3 H(+). Its pathway is cofactor biosynthesis; biotin biosynthesis; biotin from 7,8-diaminononanoate: step 1/2. Catalyzes a mechanistically unusual reaction, the ATP-dependent insertion of CO2 between the N7 and N8 nitrogen atoms of 7,8-diaminopelargonic acid (DAPA, also called 7,8-diammoniononanoate) to form a ureido ring. The protein is ATP-dependent dethiobiotin synthetase BioD of Akkermansia muciniphila (strain ATCC BAA-835 / DSM 22959 / JCM 33894 / BCRC 81048 / CCUG 64013 / CIP 107961 / Muc).